Here is a 717-residue protein sequence, read N- to C-terminus: Coupling protein TraD (717 aa).

The Cytoplasmic portion of the chain corresponds to 1–27; that stretch reads MSFNAKDMTQGGQIASMRIRMFSQIAN. The chain crosses the membrane as a helical span at residues 28-47; sequence IMLYCLFIFFWILVGLVLWI. Residues 48-104 are Periplasmic-facing; it reads KISWQTFVNGCIYWWCTTLEGMRDLIKSQPVYEIQYYGKTFRMNAAQVLHDKYMIWC. A helical transmembrane segment spans residues 105-130; the sequence is SEQLWSAFVLAAVVALVICLITFFVV. The Cytoplasmic portion of the chain corresponds to 131-717; it reads SWILGRQGKQ…GEDVEPGDDF (587 aa). Residue 192–199 coordinates ATP; the sequence is GTVGAGKS. Disordered regions lie at residues 614-639 and 650-669; these read EDVT…DSGV and LKMK…ISES.

This sequence belongs to the TrwB coupling protein family. As to quaternary structure, interacts with relaxosome component TraM. May form a hexamer in the membrane.

The protein resides in the cell inner membrane. In terms of biological role, conjugative DNA transfer (CDT) is the unidirectional transfer of ssDNA plasmid from a donor to a recipient cell. It is the central mechanism by which antibiotic resistance and virulence factors are propagated in bacterial populations. Couples the transferosome to a type IV secretion system. Probably forms a pore through which single-stranded plasmid DNA is transferred to the secretion system. The last 37 residues are important for determining plasmid specificity and transfer efficiency, with additional specificity conferred by the TraD-TraM pair. The sequence is that of Coupling protein TraD (traD) from Escherichia coli (strain K12).